A 448-amino-acid polypeptide reads, in one-letter code: SET domain-containing protein SmydA-8, isoform B (448 aa).

The region spanning 42–273 (PSWRVADSPI…AGAEITMSYA (232 aa)) is the SET domain.

The protein belongs to the class V-like SAM-binding methyltransferase superfamily.

This chain is SET domain-containing protein SmydA-8, isoform B, found in Drosophila melanogaster (Fruit fly).